Here is a 255-residue protein sequence, read N- to C-terminus: Triosephosphate isomerase (255 aa).

10–12 contributes to the substrate binding site; the sequence is NWK. His96 serves as the catalytic Electrophile. The active-site Proton acceptor is Glu168. Residues Gly174, Ser213, and 234 to 235 contribute to the substrate site; that span reads GG.

Belongs to the triosephosphate isomerase family. Homodimer.

It is found in the cytoplasm. The enzyme catalyses D-glyceraldehyde 3-phosphate = dihydroxyacetone phosphate. Its pathway is carbohydrate biosynthesis; gluconeogenesis. The protein operates within carbohydrate degradation; glycolysis; D-glyceraldehyde 3-phosphate from glycerone phosphate: step 1/1. Involved in the gluconeogenesis. Catalyzes stereospecifically the conversion of dihydroxyacetone phosphate (DHAP) to D-glyceraldehyde-3-phosphate (G3P). The sequence is that of Triosephosphate isomerase from Histophilus somni (strain 129Pt) (Haemophilus somnus).